Consider the following 333-residue polypeptide: T-cell surface glycoprotein CD1b-1 (333 aa).

Positions 1 to 18 (MLLLPLLLLAVIVPGGDN) are cleaved as a signal peptide. Residues 19–302 (EDVFQGPTSF…LYWGHPTSTG (284 aa)) lie on the Extracellular side of the membrane. 4 N-linked (GlcNAc...) asparagine glycosylation sites follow: asparagine 38, asparagine 75, asparagine 146, and asparagine 258. Intrachain disulfides connect cysteine 120–cysteine 184 and cysteine 224–cysteine 279. In terms of domain architecture, Ig-like spans 185 to 295 (PRYFLSVLDA…LGDQDIVLYW (111 aa)). The helical transmembrane segment at 303-323 (LIFVAIIVSSLILLICLALWF) threads the bilayer. At 324–333 (WRRWSYLTIL) the chain is on the cytoplasmic side. An Internalization signal motif is present at residues 329 to 332 (YLTI).

In terms of assembly, heterodimer with B2M (beta-2-microglobulin). Interacts with saposin C.

Its subcellular location is the cell membrane. It is found in the endosome membrane. The protein localises to the lysosome membrane. Its function is as follows. Antigen-presenting protein that binds self and non-self lipid and glycolipid antigens and presents them to T-cell receptors on natural killer T-cells. The protein is T-cell surface glycoprotein CD1b-1 of Ovis aries (Sheep).